Consider the following 253-residue polypeptide: Ribosome-inactivating protein saporin-9 (253 aa).

The active site involves Glu-176.

The enzyme catalyses Endohydrolysis of the N-glycosidic bond at one specific adenosine on the 28S rRNA.. Ribosome-inactivating protein of type 1, inhibits protein synthesis in animal cells. This Saponaria officinalis (Common soapwort) protein is Ribosome-inactivating protein saporin-9 (SAP9).